The following is a 245-amino-acid chain: Dehydrogenase/reductase SDR family member 6 (245 aa).

Residues 16–18, Asp-37, and Asp-58 each bind NAD(+); that span reads QGI. Arg-144 lines the substrate pocket. Tyr-147 serves as the catalytic Proton acceptor. Residues Lys-151 and 180 to 184 each bind NAD(+); that span reads VDTPS. Arg-188 and Arg-205 together coordinate substrate.

This sequence belongs to the short-chain dehydrogenases/reductases (SDR) family. Homotetramer.

It is found in the cytoplasm. It carries out the reaction cis-4-hydroxy-L-proline + NAD(+) = 4-oxo-L-proline + NADH + H(+). It catalyses the reaction (R)-3-hydroxybutanoate + NAD(+) = acetoacetate + NADH + H(+). It participates in amino-acid metabolism. It functions in the pathway siderophore biosynthesis. In terms of biological role, NAD(H)-dependent dehydrogenase/reductase with a preference for cyclic substrates. Catalyzes stereoselective conversion of 4-oxo-L-proline to cis-4-hydroxy-L-proline, likely a detoxification mechanism for ketoprolines. Mediates the formation of 2,5-dihydroxybenzoate (2,5-DHBA), a siderophore that chelates free cytoplasmic iron, thereby regulating iron transport and homeostasis while protecting cells against free radical-induced oxidative stress. The iron-siderophore complex is imported into mitochondria, providing an iron source for mitochondrial metabolic processes in particular heme synthesis. May act as a 3-hydroxybutyrate dehydrogenase. The chain is Dehydrogenase/reductase SDR family member 6 (bdh2) from Aquarana catesbeiana (American bullfrog).